The chain runs to 382 residues: Acetyltransferase eriL (382 aa).

The next 6 membrane-spanning stretches (helical) occupy residues 5–25 (LQPLPGGLQVAVQACLFLGAV), 33–53 (ALLFPPVLAMSLYMLLYTTTG), 59–79 (IVTWSLITTSLLQGSDILLIN), 146–166 (TLFYFVVLDLVHTFIVLSPVF), 192–212 (LWSYMSFGYSAASVVLVALGV), and 335–355 (GYMWTFLWFVFTLPHWMDPQF).

It belongs to the wax synthase family.

Its subcellular location is the membrane. It catalyses the reaction cyathatriol + acetyl-CoA = 11-O-acetylcyathatriol + CoA. It carries out the reaction cyathin A3 + acetyl-CoA = 11-O-acetylcyathin A3 + CoA. Its pathway is secondary metabolite biosynthesis. Functionally, acetyltransferase; part of the gene cluster that mediates the biosynthesis of erinacines, cyathane-xylosides that show unique biological activities, including leishmanicidal activity, stimulating activity for nerve growth-factor synthesis, and agonistic activity toward the kappa opioid receptor. Within the pathway, eriL converts cyathatriol into 11-O-acetyl-cyathatriol. EriL is also able to acetylate cyathin A3 to produce 11-O-acetylcyathin A3. The first step of the erinacines biosynthesis pathway is catalyzed by the geranylgeranyl diphosphate (GGPP) synthase eriE via conversion of farnesyl pyrophosphate and isopentyl pyrophosphate into geranylgeranyl pyrophosphate (GGPP). GGPP is then substrate of the diterpene cyclase eriG for the production of cyatha-3,12-diene. The cytochrome P450 monooxygenase eriI then hydroxylates cyatha-3,12-diene at C-14 of the seven-membered ring to produce erinacol, which is further hydroxylated at C-15 by the cytochrome P450 monooxygenase eriC to yield cyathadiol. The cytochrome P450 monooxygenase eriA then catalyzes C-11 hydroxylation in the presence of the short chain dehydrogenase/reductase (SDR) eriH, which leads to the production of cyathatriol. The acetyltransferase eriL converts cyathatriol into 11-O-acetyl-cyathatriol. The SDR eriH catalyzes further oxidation of 11-O-acetyl-cyathatriol into 1-O-acetylcyathin A3. Finally, the glycosyl transferase eriJ tranfers xylose from UDP-xylose onto C-14 of 11-O-acetyl-cyathatriol to form eracine Q. EriJ is also able to convert 11-O-acetyl-cyathatriol to eracine Q2 by using UDP-D-glucose as cosubstrate, but at a lower rate. The sequence is that of Acetyltransferase eriL from Hericium erinaceus (Lion's mane mushroom).